The chain runs to 367 residues: Pyrimidine monooxygenase RutA (367 aa).

FMN contacts are provided by residues isoleucine 49–lysine 50, asparagine 115, glutamate 124, arginine 140–tyrosine 141, and serine 190.

Belongs to the NtaA/SnaA/DszA monooxygenase family. RutA subfamily.

It catalyses the reaction uracil + FMNH2 + NADH + O2 = (Z)-3-ureidoacrylate + FMN + NAD(+) + H2O + H(+). The enzyme catalyses thymine + FMNH2 + NADH + O2 = (Z)-2-methylureidoacrylate + FMN + NAD(+) + H2O + H(+). Functionally, catalyzes the pyrimidine ring opening between N-3 and C-4 by an unusual flavin hydroperoxide-catalyzed mechanism, adding oxygen atoms in the process to yield ureidoacrylate peracid, that immediately reacts with FMN forming ureidoacrylate and FMN-N(5)-oxide. The FMN-N(5)-oxide reacts spontaneously with NADH to produce FMN. Requires the flavin reductase RutF to regenerate FMN in vivo. The protein is Pyrimidine monooxygenase RutA of Yersinia enterocolitica serotype O:8 / biotype 1B (strain NCTC 13174 / 8081).